Here is a 267-residue protein sequence, read N- to C-terminus: Hydroxyethylthiazole kinase (267 aa).

Substrate is bound at residue methionine 48. Positions 124 and 170 each coordinate ATP. Glycine 197 serves as a coordination point for substrate.

Belongs to the Thz kinase family. Mg(2+) serves as cofactor.

It carries out the reaction 5-(2-hydroxyethyl)-4-methylthiazole + ATP = 4-methyl-5-(2-phosphooxyethyl)-thiazole + ADP + H(+). It functions in the pathway cofactor biosynthesis; thiamine diphosphate biosynthesis; 4-methyl-5-(2-phosphoethyl)-thiazole from 5-(2-hydroxyethyl)-4-methylthiazole: step 1/1. Catalyzes the phosphorylation of the hydroxyl group of 4-methyl-5-beta-hydroxyethylthiazole (THZ). The chain is Hydroxyethylthiazole kinase from Aliivibrio fischeri (strain ATCC 700601 / ES114) (Vibrio fischeri).